The sequence spans 328 residues: Transcription factor bHLH25 (328 aa).

The interval 125 to 152 (PHQKSDEFNRKGTKRAQPFSRNQSNAQD) is disordered. A bHLH domain is found at 148 to 197 (SNAQDHIIAERKRREKLTQRFVALSALVPGLKKMDKASVLGDALKHIKYL).

Homodimer. As to expression, expressed in flowers.

The protein resides in the nucleus. The polypeptide is Transcription factor bHLH25 (BHLH25) (Arabidopsis thaliana (Mouse-ear cress)).